The primary structure comprises 301 residues: Recombination-associated protein RdgC (301 aa).

It belongs to the RdgC family.

It is found in the cytoplasm. The protein localises to the nucleoid. In terms of biological role, may be involved in recombination. The chain is Recombination-associated protein RdgC from Xanthomonas oryzae pv. oryzae (strain MAFF 311018).